Reading from the N-terminus, the 385-residue chain is S-adenosylmethionine synthase (385 aa).

Position 14 (His-14) interacts with ATP. Mg(2+) is bound at residue Asp-16. Position 42 (Glu-42) interacts with K(+). L-methionine-binding residues include Glu-55 and Gln-98. The flexible loop stretch occupies residues 98–108 (QSGDIAQAVDN). Residues 165-167 (DAK), 232-233 (RF), Asp-241, 247-248 (RK), Ala-264, and Lys-268 contribute to the ATP site. Asp-241 contributes to the L-methionine binding site. Lys-272 lines the L-methionine pocket.

Belongs to the AdoMet synthase family. In terms of assembly, homotetramer; dimer of dimers. Mg(2+) is required as a cofactor. The cofactor is K(+).

The protein localises to the cytoplasm. It catalyses the reaction L-methionine + ATP + H2O = S-adenosyl-L-methionine + phosphate + diphosphate. It participates in amino-acid biosynthesis; S-adenosyl-L-methionine biosynthesis; S-adenosyl-L-methionine from L-methionine: step 1/1. Functionally, catalyzes the formation of S-adenosylmethionine (AdoMet) from methionine and ATP. The overall synthetic reaction is composed of two sequential steps, AdoMet formation and the subsequent tripolyphosphate hydrolysis which occurs prior to release of AdoMet from the enzyme. This is S-adenosylmethionine synthase from Leuconostoc mesenteroides subsp. mesenteroides (strain ATCC 8293 / DSM 20343 / BCRC 11652 / CCM 1803 / JCM 6124 / NCDO 523 / NBRC 100496 / NCIMB 8023 / NCTC 12954 / NRRL B-1118 / 37Y).